An 865-amino-acid chain; its full sequence is Adenylate cyclase (865 aa).

The interval 1–540 (MYLYIETLKQ…DISSHFPIRL (540 aa)) is catalytic. A regulatory region spans residues 546–865 (KALYSPCEIR…FNDYQAVHHH (320 aa)).

This sequence belongs to the adenylyl cyclase class-1 family.

It is found in the cytoplasm. The enzyme catalyses ATP = 3',5'-cyclic AMP + diphosphate. The protein is Adenylate cyclase (cya) of Proteus mirabilis.